The chain runs to 388 residues: Chorismate synthase (388 aa).

Residues Arg-39 and Arg-45 each coordinate NADP(+). FMN contacts are provided by residues 130–132, 251–252, Gly-296, 311–315, and Arg-337; these read RSS, NA, and KPIPT.

This sequence belongs to the chorismate synthase family. In terms of assembly, homotetramer. Requires FMNH2 as cofactor.

It carries out the reaction 5-O-(1-carboxyvinyl)-3-phosphoshikimate = chorismate + phosphate. Its pathway is metabolic intermediate biosynthesis; chorismate biosynthesis; chorismate from D-erythrose 4-phosphate and phosphoenolpyruvate: step 7/7. In terms of biological role, catalyzes the anti-1,4-elimination of the C-3 phosphate and the C-6 proR hydrogen from 5-enolpyruvylshikimate-3-phosphate (EPSP) to yield chorismate, which is the branch point compound that serves as the starting substrate for the three terminal pathways of aromatic amino acid biosynthesis. This reaction introduces a second double bond into the aromatic ring system. The sequence is that of Chorismate synthase from Streptococcus pyogenes serotype M12 (strain MGAS2096).